The primary structure comprises 485 residues: Cysteine--tRNA ligase (485 aa).

Cys-27 lines the Zn(2+) pocket. A 'HIGH' region motif is present at residues 29-39 (ITAYDLCHIGH). The Zn(2+) site is built by Cys-208, His-233, and Glu-237. A 'KMSKS' region motif is present at residues 265–269 (KMSKS). Lys-268 is an ATP binding site.

Belongs to the class-I aminoacyl-tRNA synthetase family. In terms of assembly, monomer. Zn(2+) serves as cofactor.

It is found in the cytoplasm. It carries out the reaction tRNA(Cys) + L-cysteine + ATP = L-cysteinyl-tRNA(Cys) + AMP + diphosphate. In Nitratidesulfovibrio vulgaris (strain ATCC 29579 / DSM 644 / CCUG 34227 / NCIMB 8303 / VKM B-1760 / Hildenborough) (Desulfovibrio vulgaris), this protein is Cysteine--tRNA ligase.